The sequence spans 551 residues: Protein PLASTID TRANSCRIPTIONALLY ACTIVE 12, chloroplastic (551 aa).

The transit peptide at 1 to 47 directs the protein to the chloroplast; sequence MASCSRTWLLPGMAPQATAQTVPRPLQSLKVFAGLPHRRRVLFSGVS. Disordered stretches follow at residues 76-161 and 463-529; these read SSYF…EGES and HSYN…DQLS. The span at 109 to 119 shows a compositional bias: low complexity; the sequence is RVRAARAPAPV. Acidic residues-rich tracts occupy residues 467-476 and 485-498; these read EDSDDDEEDA and SLED…DAED. Over residues 505–516 the composition is skewed to polar residues; it reads RNWSVLKTTGQA. Residues 518–529 show a composition bias toward basic and acidic residues; the sequence is NPKEKSKKDQLS.

Component of the plastid-encoded plastid RNA polymerase (PEP) complex.

It localises to the plastid. Its subcellular location is the chloroplast. In terms of biological role, required for the activity of the plastid-encoded RNA polymerase (PEP) and full expression of genes transcribed by PEP. Required for the proper build-up and formation of the PEP-complex. Binds single-stranded (ss) DNA and RNA, but not double-stranded (ds) DNA. This Oryza sativa subsp. japonica (Rice) protein is Protein PLASTID TRANSCRIPTIONALLY ACTIVE 12, chloroplastic.